Here is a 962-residue protein sequence, read N- to C-terminus: MREESWEDHDTIQLTAQRKYLAEVQALETLLTRELSVFLTEPGSKKTNIINRITGKTYALPSTELLRLYEHLEQCRKQGALMYFLERQGTYSGLMLDYDLKLNTNAAPPLEPPALSRLCHRIFVHIKNSSVLPEGSHKIHFFFTLKPEVVQGKYGFHVLIPGLKLAASTKKSIIGSLQHDATVQKILHEQGVANPESCLDPHSASVPSLLYGSSKLNHKPYQLKTGFELVFDSSDPDYIPIHQIKNIESYNLVSELSLTNEQGSLVRPVYCAADIAAEKEEEIPTEDHSLSILMLHDPEARYLHKILNLLPPEYYVEYPLWSNVVFALANTSANYRPLAEWFSQKCPEKWNTGGKEKLEQLWNDASRHTEKKITKRSIMYWAHKHAPQQYKEIVEQGYFSILAEYVYSYNGMLEHYMIAKVIYAMMGNKFVVDVDSNGKYVWFEFVLPGQPMNQGEIWKWRKEVNPDELHIYISENFSRVMDRITEHIKYHLSQPHETNILNYYKKLLKAFERSKSKIFNDSFKKGVIRQAEFLFRQRSFIQTLDTNPHLLGVGNGVLSIETIPAKLINHFHEHPIHQYTHICYVPFNPENPWTKLLLNALQDIIPELDARLWIMFYLSTAIFRGLKEALMLLWLGGGCNGKTFLMRLVAMVLGDHYASKLNISLLTSYRETAEKPNSAFMRLKGRGYGYFEETNKSEVLNTSRLKEMVNPGDVTARELNQKQESFQMTATMVAASNYNFIIDTTDHGTWRRLRHYRSKVKFCHNPDPNNSYEKKEDPRFIHEYIMDPNCQNAFFSILVYFWEKLQKEYNGQIKKVFCPTIESETEAYRKSQDTLHRFITERIVESPSAETVYNLSEVVTAYAEWYNANINVKRHIALELSQELENSVLEKYLQWSPNKTRILKGCRILHKFETLQPGESYIGVSTAGTLLNTPICEPKNKWWEWSPNPSAPPEKEASAPTP.

The region spanning 607–775 is the SF3 helicase domain; the sequence is ELDARLWIMF…PDPNNSYEKK (169 aa). 636 to 643 provides a ligand contact to ATP; that stretch reads GGGCNGKT.

This sequence belongs to the asfivirus helicase C962R family.

The polypeptide is Putative primase C962R (African swine fever virus (isolate Warthog/Namibia/Wart80/1980) (ASFV)).